Consider the following 287-residue polypeptide: MMKPFGKVLCAAGSLAVLLAFFWRDTFQPEQLSGARVLLTGASAGIGEQMAYHYATFGAEIVLTARREAVLQEVMKKCLTLGAKKVFYIPADMSSPSEPDRVVQFAVQNLGGLDYLVLNHIGVSPFQMWGGDVEHTRWLMQVNFFSYVALATAALPTLEKNHGSVVVVSSLTGKIPTPFTTSYSATKFALDGFFSSLRHELTMQKRNVSITLCILGLIDTDAALEKTRGKVFIAASPAAEAALAIIRGGAARLRELFYPWWLQPVHGLWVLLPNPRVLQSFYNYSGP.

Residues 1–20 form the signal peptide; the sequence is MMKPFGKVLCAAGSLAVLLA. NADP(+) contacts are provided by residues 41-67, 92-93, and 119-121; these read GASA…TARR, DM, and NHI. Serine 170 provides a ligand contact to substrate. Residue tyrosine 183 is the Proton acceptor of the active site. Residues 183-187 and 216-222 each bind NADP(+); these read YSATK and GLIDTDA.

Belongs to the short-chain dehydrogenases/reductases (SDR) family.

It localises to the secreted. The enzyme catalyses cortisone + NADPH + H(+) = cortisol + NADP(+). Functionally, unidirectional NADP(+)-dependent cortisol dehydrogenase (in vitro). This is Hydroxysteroid 11-beta-dehydrogenase 1-like protein (HSD11B1L) from Gallus gallus (Chicken).